A 341-amino-acid chain; its full sequence is Phosphoribosylformylglycinamidine cyclo-ligase (341 aa).

The protein belongs to the AIR synthase family.

The protein resides in the cytoplasm. The catalysed reaction is 2-formamido-N(1)-(5-O-phospho-beta-D-ribosyl)acetamidine + ATP = 5-amino-1-(5-phospho-beta-D-ribosyl)imidazole + ADP + phosphate + H(+). It participates in purine metabolism; IMP biosynthesis via de novo pathway; 5-amino-1-(5-phospho-D-ribosyl)imidazole from N(2)-formyl-N(1)-(5-phospho-D-ribosyl)glycinamide: step 2/2. In Lachnoclostridium phytofermentans (strain ATCC 700394 / DSM 18823 / ISDg) (Clostridium phytofermentans), this protein is Phosphoribosylformylglycinamidine cyclo-ligase.